Reading from the N-terminus, the 431-residue chain is Glutamate-1-semialdehyde 2,1-aminomutase (431 aa).

Lys-269 bears the N6-(pyridoxal phosphate)lysine mark.

Belongs to the class-III pyridoxal-phosphate-dependent aminotransferase family. HemL subfamily. As to quaternary structure, homodimer. Requires pyridoxal 5'-phosphate as cofactor.

Its subcellular location is the cytoplasm. It catalyses the reaction (S)-4-amino-5-oxopentanoate = 5-aminolevulinate. The protein operates within porphyrin-containing compound metabolism; protoporphyrin-IX biosynthesis; 5-aminolevulinate from L-glutamyl-tRNA(Glu): step 2/2. It functions in the pathway porphyrin-containing compound metabolism; chlorophyll biosynthesis. The chain is Glutamate-1-semialdehyde 2,1-aminomutase from Pelodictyon phaeoclathratiforme (strain DSM 5477 / BU-1).